A 335-amino-acid chain; its full sequence is Phospho-N-acetylmuramoyl-pentapeptide-transferase (335 aa).

9 helical membrane passes run 2–22 (PPLFCVLKAFFIGLVVSLILV), 55–75 (IPTAGGIIFVLSVVLSILLLL), 77–97 (CNLWSTWFLVGATLLWGALGW), 118–137 (FFIQNCLAIGTVLPIMIAYG), 153–173 (LPHCWLGYLFSFSIAVLAIVG), 193–213 (VIACLGMLIVTFAYGAPWAFI), 238–258 (IFMGDTGSLFLGGMLGICAVL), 263–283 (FMLLFMGGIFVLESLSVILQV), and 313–333 (VVRNFWIIEFLCVAIGIFAVF).

Belongs to the glycosyltransferase 4 family. MraY subfamily. Mg(2+) serves as cofactor.

It localises to the cell inner membrane. The catalysed reaction is UDP-N-acetyl-alpha-D-muramoyl-L-alanyl-gamma-D-glutamyl-meso-2,6-diaminopimeloyl-D-alanyl-D-alanine + di-trans,octa-cis-undecaprenyl phosphate = di-trans,octa-cis-undecaprenyl diphospho-N-acetyl-alpha-D-muramoyl-L-alanyl-D-glutamyl-meso-2,6-diaminopimeloyl-D-alanyl-D-alanine + UMP. The protein operates within cell wall biogenesis; peptidoglycan biosynthesis. In terms of biological role, catalyzes the initial step of the lipid cycle reactions in the biosynthesis of the cell wall peptidoglycan: transfers peptidoglycan precursor phospho-MurNAc-pentapeptide from UDP-MurNAc-pentapeptide onto the lipid carrier undecaprenyl phosphate, yielding undecaprenyl-pyrophosphoryl-MurNAc-pentapeptide, known as lipid I. The polypeptide is Phospho-N-acetylmuramoyl-pentapeptide-transferase (Chlamydia muridarum (strain MoPn / Nigg)).